A 249-amino-acid polypeptide reads, in one-letter code: Demethylmenaquinone methyltransferase (249 aa).

S-adenosyl-L-methionine is bound by residues T67, D87, and 115–116 (DA).

This sequence belongs to the class I-like SAM-binding methyltransferase superfamily. MenG/UbiE family.

The enzyme catalyses a 2-demethylmenaquinol + S-adenosyl-L-methionine = a menaquinol + S-adenosyl-L-homocysteine + H(+). It functions in the pathway quinol/quinone metabolism; menaquinone biosynthesis; menaquinol from 1,4-dihydroxy-2-naphthoate: step 2/2. Methyltransferase required for the conversion of demethylmenaquinol (DMKH2) to menaquinol (MKH2). In Leptospira interrogans serogroup Icterohaemorrhagiae serovar copenhageni (strain Fiocruz L1-130), this protein is Demethylmenaquinone methyltransferase.